A 755-amino-acid chain; its full sequence is Xaa-Pro dipeptidyl-peptidase (755 aa).

Active-site charge relay system residues include serine 348, aspartate 468, and histidine 498.

It belongs to the peptidase S15 family. As to quaternary structure, homodimer.

Its subcellular location is the cytoplasm. The enzyme catalyses Hydrolyzes Xaa-Pro-|- bonds to release unblocked, N-terminal dipeptides from substrates including Ala-Pro-|-p-nitroanilide and (sequentially) Tyr-Pro-|-Phe-Pro-|-Gly-Pro-|-Ile.. Functionally, removes N-terminal dipeptides sequentially from polypeptides having unsubstituted N-termini provided that the penultimate residue is proline. In Streptococcus thermophilus, this protein is Xaa-Pro dipeptidyl-peptidase.